A 255-amino-acid polypeptide reads, in one-letter code: 5'-nucleotidase SurE (255 aa).

4 residues coordinate a divalent metal cation: aspartate 8, aspartate 9, serine 40, and asparagine 92.

This sequence belongs to the SurE nucleotidase family. The cofactor is a divalent metal cation.

The protein resides in the cytoplasm. It carries out the reaction a ribonucleoside 5'-phosphate + H2O = a ribonucleoside + phosphate. Functionally, nucleotidase that shows phosphatase activity on nucleoside 5'-monophosphates. This is 5'-nucleotidase SurE from Brucella suis (strain ATCC 23445 / NCTC 10510).